The primary structure comprises 416 residues: Probable endo-beta-1,4-glucanase celB (416 aa).

An N-terminal signal peptide occupies residues 1–17 (MIWTLAPFVALLPLVTA). N-linked (GlcNAc...) asparagine glycosylation is found at asparagine 45, asparagine 104, asparagine 117, and asparagine 135. The Nucleophile role is filled by glutamate 214. Glutamate 219 (proton donor) is an active-site residue. N-linked (GlcNAc...) asparagine glycans are attached at residues asparagine 233, asparagine 278, asparagine 292, and asparagine 382.

Belongs to the glycosyl hydrolase 7 (cellulase C) family.

The protein localises to the secreted. The catalysed reaction is Endohydrolysis of (1-&gt;4)-beta-D-glucosidic linkages in cellulose, lichenin and cereal beta-D-glucans.. Its function is as follows. Has endoglucanase activity on substrates containing beta-1,4 glycosidic bonds, like in carboxymethylcellulose (CMC), hydroxyethylcellulose (HEC) and beta-glucan. Involved in the degradation of complex natural cellulosic substrates. The chain is Probable endo-beta-1,4-glucanase celB (celB) from Aspergillus flavus (strain ATCC 200026 / FGSC A1120 / IAM 13836 / NRRL 3357 / JCM 12722 / SRRC 167).